The primary structure comprises 166 residues: Lactose-binding lectin l-2 (166 aa).

A signal peptide spans 1-24 (MVSFKLPAFLCVAVLSSMALVSHG). 3 disulfides stabilise this stretch: cysteine 34–cysteine 45, cysteine 62–cysteine 160, and cysteine 136–cysteine 152. The 121-residue stretch at 41-161 (HKNRCYLHVA…CDLLFPSICV (121 aa)) folds into the C-type lectin domain.

Homodimer; disulfide-linked. Skin; contained within club cells which are a component of the epidermis in combination with epithelial cells and mucus cells (at protein level).

The protein localises to the secreted. Functionally, involved in host defense at the body surface. Causes agglutination and suppresses the growth of the Gram-negative bacterium E.coli K12. Possesses calcium-independent hemagglutinating activity. This chain is Lactose-binding lectin l-2, found in Anguilla japonica (Japanese eel).